A 71-amino-acid chain; its full sequence is MNDLKLLRSKLSTETIEELYKNLNLLKKELFNLRFQQALGELKNTSRFLLVKKSIARIKTELTKRSNSEEY.

Belongs to the universal ribosomal protein uL29 family.

This Rickettsia massiliae (strain Mtu5) protein is Large ribosomal subunit protein uL29.